Consider the following 217-residue polypeptide: Probable GTP-binding protein EngB (217 aa).

Residues 37–214 form the EngB-type G domain; that stretch reads AGIEVAFAGR…RAAMIRLLDE (178 aa). GTP is bound by residues 45–52, 72–76, 92–95, 159–162, and 193–195; these read GRSNVGKS, GRTQE, DMPG, TKAD, and TSS. Mg(2+)-binding residues include serine 52 and threonine 74.

The protein belongs to the TRAFAC class TrmE-Era-EngA-EngB-Septin-like GTPase superfamily. EngB GTPase family. Requires Mg(2+) as cofactor.

Necessary for normal cell division and for the maintenance of normal septation. The chain is Probable GTP-binding protein EngB from Rhodopseudomonas palustris (strain BisB5).